The primary structure comprises 430 residues: SH3 domain-containing protein PJ696.02 (430 aa).

The tract at residues 237 to 372 (EPEDIWGPSS…KPKFKQDSLG (136 aa)) is disordered. The segment covering 263–277 (RRGDSYRSNRSRAHD) has biased composition (basic and acidic residues). Ser-285 carries the post-translational modification Phosphoserine. Basic and acidic residues predominate over residues 304-313 (SKMDNRRSKY). Thr-316 is modified (phosphothreonine). Phosphoserine is present on residues Ser-318 and Ser-324. Phosphotyrosine is present on Tyr-325. Phosphoserine is present on residues Ser-326, Ser-354, and Ser-406. The span at 333–358 (VYSSDVSTESSSQFSSRSSEYSKPSR) shows a compositional bias: low complexity. The 60-residue stretch at 371–430 (LGPNQARAMYSFAGEQPGDLSFQKGDIIDIVERSGSHDDWWTGRIGYREGIFPANYVKLS) folds into the SH3 domain.

It belongs to the SH3YL1 family.

The polypeptide is SH3 domain-containing protein PJ696.02 (Schizosaccharomyces pombe (strain 972 / ATCC 24843) (Fission yeast)).